Reading from the N-terminus, the 139-residue chain is Putative nickel-responsive regulator (139 aa).

The Ni(2+) site is built by His-79, His-90, His-92, and Cys-98.

The protein belongs to the transcriptional regulatory CopG/NikR family. Ni(2+) serves as cofactor.

Transcriptional regulator. The sequence is that of Putative nickel-responsive regulator from Geobacter sulfurreducens (strain ATCC 51573 / DSM 12127 / PCA).